Here is a 250-residue protein sequence, read N- to C-terminus: Proteasome subunit alpha type-7-A (250 aa).

Lys-62 is covalently cross-linked (Glycyl lysine isopeptide (Lys-Gly) (interchain with G-Cter in ubiquitin)).

This sequence belongs to the peptidase T1A family. In terms of assembly, component of the 20S core complex of the 26S proteasome. The 26S proteasome is composed of a core protease (CP), known as the 20S proteasome, capped at one or both ends by the 19S regulatory particle (RP/PA700). The 20S proteasome core is composed of 28 subunits that are arranged in four stacked rings, resulting in a barrel-shaped structure. The two end rings are each formed by seven alpha subunits, and the two central rings are each formed by seven beta subunits. The catalytic chamber with the active sites is on the inside of the barrel. Interacts with KIN10 and KIN11 SnRK subunits, and with the SKP1A/ASK1 subunit of the SCF E3 ubiquitin ligase complex. In terms of tissue distribution, expressed in roots, leaves and flowers.

It is found in the cytoplasm. The protein localises to the nucleus. In terms of biological role, the proteasome is a multicatalytic proteinase complex which is characterized by its ability to cleave peptides with Arg, Phe, Tyr, Leu, and Glu adjacent to the leaving group at neutral or slightly basic pH. The proteasome has an ATP-dependent proteolytic activity. Mediates the association of the SCF(TIR1) E3 ubiquitin ligase complex with the proteasome. The protein is Proteasome subunit alpha type-7-A (PAD1) of Arabidopsis thaliana (Mouse-ear cress).